The chain runs to 201 residues: tRNA (guanine-N(7)-)-methyltransferase (201 aa).

S-adenosyl-L-methionine-binding residues include E33, E58, D85, and D108. D108 is a catalytic residue. Residues K112 and D144 each coordinate substrate.

Belongs to the class I-like SAM-binding methyltransferase superfamily. TrmB family.

The catalysed reaction is guanosine(46) in tRNA + S-adenosyl-L-methionine = N(7)-methylguanosine(46) in tRNA + S-adenosyl-L-homocysteine. It participates in tRNA modification; N(7)-methylguanine-tRNA biosynthesis. Catalyzes the formation of N(7)-methylguanine at position 46 (m7G46) in tRNA. In Anaeromyxobacter dehalogenans (strain 2CP-C), this protein is tRNA (guanine-N(7)-)-methyltransferase.